We begin with the raw amino-acid sequence, 111 residues long: Nucleoid-associated protein Cpha266_1171 (111 aa).

It belongs to the YbaB/EbfC family. Homodimer.

The protein resides in the cytoplasm. The protein localises to the nucleoid. Binds to DNA and alters its conformation. May be involved in regulation of gene expression, nucleoid organization and DNA protection. In Chlorobium phaeobacteroides (strain DSM 266 / SMG 266 / 2430), this protein is Nucleoid-associated protein Cpha266_1171.